Consider the following 375-residue polypeptide: 23S rRNA (uracil(747)-C(5))-methyltransferase RlmC (375 aa).

[4Fe-4S] cluster-binding residues include Cys-3, Cys-11, Cys-14, and Cys-87. S-adenosyl-L-methionine is bound by residues Gln-212, Phe-241, Glu-262, and Asn-307. The active-site Nucleophile is the Cys-334.

Belongs to the class I-like SAM-binding methyltransferase superfamily. RNA M5U methyltransferase family. RlmC subfamily.

The catalysed reaction is uridine(747) in 23S rRNA + S-adenosyl-L-methionine = 5-methyluridine(747) in 23S rRNA + S-adenosyl-L-homocysteine + H(+). Its function is as follows. Catalyzes the formation of 5-methyl-uridine at position 747 (m5U747) in 23S rRNA. The chain is 23S rRNA (uracil(747)-C(5))-methyltransferase RlmC from Escherichia coli (strain SMS-3-5 / SECEC).